The following is a 174-amino-acid chain: NADH-quinone oxidoreductase subunit B 1 (174 aa).

[4Fe-4S] cluster contacts are provided by Cys-38, Cys-39, Cys-104, and Cys-133.

This sequence belongs to the complex I 20 kDa subunit family. In terms of assembly, NDH-1 is composed of 14 different subunits. Subunits NuoB, C, D, E, F, and G constitute the peripheral sector of the complex. [4Fe-4S] cluster is required as a cofactor.

The protein resides in the cell membrane. The enzyme catalyses a quinone + NADH + 5 H(+)(in) = a quinol + NAD(+) + 4 H(+)(out). In terms of biological role, NDH-1 shuttles electrons from NADH, via FMN and iron-sulfur (Fe-S) centers, to quinones in the respiratory chain. The immediate electron acceptor for the enzyme in this species is believed to be ubiquinone. Couples the redox reaction to proton translocation (for every two electrons transferred, four hydrogen ions are translocated across the cytoplasmic membrane), and thus conserves the redox energy in a proton gradient. The chain is NADH-quinone oxidoreductase subunit B 1 from Chloroflexus aggregans (strain MD-66 / DSM 9485).